A 382-amino-acid polypeptide reads, in one-letter code: MSTYTQPVMLLLSGLLLLTLAIAVLNTLVPLWLAQEHMSTWQVGVVSSSYFTGNLVGTLLTGYVIKRIGFNRSYYLASFIFAAGCAGLGLMIGFWSWLAWRFVAGVGCAMIWVVVESALMCSGTSRNRGRLLAAYMMVYYVGTFLGQLLVSKVSTELMSVLPWVTGLTLAGILPLLFTRVLNQQAENHDSTSITSMLKLRQARLGVNGCIISGIVLGSLYGLMPLYLNHKGVSNASIGFWMAVLVSAGILGQWPIGRLADKFGRLLVLRVQVFVVILGSIAMLSQAAMAPALFILGAAGFTLYPVAMAWACEKVEHHQLVAMNQALLLSYTVGSLLGPSFTAMLMQNFSDNLLFIMIASVSFIYLLMLLRNAGHTPKPVAHV.

12 helical membrane-spanning segments follow: residues 14 to 34, 45 to 65, 79 to 99, 102 to 122, 131 to 151, 157 to 177, 204 to 224, 235 to 255, 270 to 290, 291 to 311, 325 to 345, and 348 to 368; these read GLLL…LWLA, VVSS…GYVI, FIFA…SWLA, FVAG…LMCS, LLAA…LLVS, LMSV…PLLF, LGVN…GLMP, ASIG…QWPI, VQVF…AMAP, ALFI…AWAC, ALLL…AMLM, and FSDN…LLML.

This sequence belongs to the major facilitator superfamily. YcaD (TC 2.A.1.26) family.

The protein resides in the cell inner membrane. This is an uncharacterized protein from Escherichia coli (strain K12 / MC4100 / BW2952).